Reading from the N-terminus, the 456-residue chain is Chromosomal replication initiator protein DnaA (456 aa).

The interval 1–85 is domain I, interacts with DnaA modulators; it reads MDADLNKLWE…EIKFIIESDL (85 aa). The tract at residues 85–117 is domain II; sequence LNNEDELNNSDNSDKNRDKNSRRNIVVNDEMSS. The segment at 118-334 is domain III, AAA+ region; that stretch reads TLNPKYTFNS…GALIRIIAYS (217 aa). Residues glycine 162, glycine 164, lysine 165, and threonine 166 each coordinate ATP. Residues 335–456 are domain IV, binds dsDNA; the sequence is SLTNREVTVD…SDITKKVSQN (122 aa).

The protein belongs to the DnaA family. Oligomerizes as a right-handed, spiral filament on DNA at oriC.

Its subcellular location is the cytoplasm. Functionally, plays an essential role in the initiation and regulation of chromosomal replication. ATP-DnaA binds to the origin of replication (oriC) to initiate formation of the DNA replication initiation complex once per cell cycle. Binds the DnaA box (a 9 base pair repeat at the origin) and separates the double-stranded (ds)DNA. Forms a right-handed helical filament on oriC DNA; dsDNA binds to the exterior of the filament while single-stranded (ss)DNA is stabiized in the filament's interior. The ATP-DnaA-oriC complex binds and stabilizes one strand of the AT-rich DNA unwinding element (DUE), permitting loading of DNA polymerase. After initiation quickly degrades to an ADP-DnaA complex that is not apt for DNA replication. Binds acidic phospholipids. This chain is Chromosomal replication initiator protein DnaA, found in Clostridium botulinum (strain Eklund 17B / Type B).